Here is a 125-residue protein sequence, read N- to C-terminus: Fluoride-specific ion channel FluC (125 aa).

Helical transmembrane passes span 6-26 (AWIALAGAGGTLSRYALSGLV), 36-56 (WGTWVVNGLGCFLFGMIWALA), 68-88 (FIVLTGFMGAFTTFSTFAFEA), and 97-117 (WLLAAIHLIGQNSLGLVCVFL). Na(+)-binding residues include glycine 76 and threonine 79.

This sequence belongs to the fluoride channel Fluc/FEX (TC 1.A.43) family.

It localises to the cell inner membrane. It carries out the reaction fluoride(in) = fluoride(out). Na(+) is not transported, but it plays an essential structural role and its presence is essential for fluoride channel function. Functionally, fluoride-specific ion channel. Important for reducing fluoride concentration in the cell, thus reducing its toxicity. The sequence is that of Fluoride-specific ion channel FluC from Nitrosococcus oceani (strain ATCC 19707 / BCRC 17464 / JCM 30415 / NCIMB 11848 / C-107).